Reading from the N-terminus, the 309-residue chain is HPr kinase/phosphorylase (309 aa).

Active-site residues include histidine 138 and lysine 159. 153-160 (GQSGVGKS) contacts ATP. Serine 160 contributes to the Mg(2+) binding site. The Proton acceptor; for phosphorylation activity. Proton donor; for dephosphorylation activity role is filled by aspartate 177. An important for the catalytic mechanism of both phosphorylation and dephosphorylation region spans residues 201-210 (LEIRGLGIIN). Mg(2+) is bound at residue glutamate 202. The active site involves arginine 243. An important for the catalytic mechanism of dephosphorylation region spans residues 264-269 (PVRPGR).

The protein belongs to the HPrK/P family. In terms of assembly, homohexamer. Mg(2+) is required as a cofactor.

It carries out the reaction [HPr protein]-L-serine + ATP = [HPr protein]-O-phospho-L-serine + ADP + H(+). It catalyses the reaction [HPr protein]-O-phospho-L-serine + phosphate + H(+) = [HPr protein]-L-serine + diphosphate. Catalyzes the ATP- as well as the pyrophosphate-dependent phosphorylation of a specific serine residue in HPr, a phosphocarrier protein of the phosphoenolpyruvate-dependent sugar phosphotransferase system (PTS). HprK/P also catalyzes the pyrophosphate-producing, inorganic phosphate-dependent dephosphorylation (phosphorolysis) of seryl-phosphorylated HPr (P-Ser-HPr). The two antagonistic activities of HprK/P are regulated by several intracellular metabolites, which change their concentration in response to the absence or presence of rapidly metabolisable carbon sources (glucose, fructose, etc.) in the growth medium. Also phosphorylates/dephosphorylates the HPr-like catabolite repression protein crh on a specific serine residue. Therefore, by controlling the phosphorylation state of HPr and crh, HPrK/P is a sensor enzyme that plays a major role in the regulation of carbon metabolism and sugar transport: it mediates carbon catabolite repression (CCR), and regulates PTS-catalyzed carbohydrate uptake and inducer exclusion. The polypeptide is HPr kinase/phosphorylase (Bacillus cereus (strain G9842)).